We begin with the raw amino-acid sequence, 146 residues long: Snaclec anticoagulant protein subunit B (146 aa).

The N-terminal stretch at 1 to 23 (MGRFIFVSFGLLVLFLSLSGTAA) is a signal peptide. The C-type lectin domain maps to 24–146 (DCPSDWSSYE…IANFVCEFQA (123 aa)). 3 disulfide bridges follow: cysteine 25/cysteine 36, cysteine 53/cysteine 142, and cysteine 119/cysteine 134. Ca(2+)-binding residues include serine 64, glutamine 66, and glutamate 70. Glutamate 143 contributes to the Ca(2+) binding site.

Belongs to the snaclec family. Heterodimer with subunit A of agkisacutacin or AaACP; disulfide-linked. Expressed by the venom gland.

The protein localises to the secreted. In terms of biological role, anticoagulant protein which binds to the gamma-carboxyglutamic acid-domain regions of factors IX and factor X in the presence of calcium with a 1 to 1 stoichiometry. Also inhibits platelet aggregation by binding to platelet glycoprotein Ibalpha (GP1BA) and functioning as a blocker of vWF. Is devoid of hemorrhagic and lethal activities. Possesses antithrombotic and thrombolytic activities. Also hydrolyzes the Aalpha-chain of fibrinogen. Does not affect the Bbeta-chain and the gamma chain. This chain is Snaclec anticoagulant protein subunit B, found in Deinagkistrodon acutus (Hundred-pace snake).